Consider the following 346-residue polypeptide: NADH-ubiquinone oxidoreductase chain 2 (346 aa).

10 helical membrane passes run Pro-3–Ser-23, His-25–Met-45, Ser-67–Met-87, Met-96–Pro-116, Ile-122–Leu-142, Ile-145–Gly-165, Thr-200–Ala-220, Ile-238–Gly-258, Asn-273–Met-293, and Phe-324–Val-344.

This sequence belongs to the complex I subunit 2 family. As to quaternary structure, core subunit of respiratory chain NADH dehydrogenase (Complex I) which is composed of 45 different subunits. Interacts with TMEM242.

Its subcellular location is the mitochondrion inner membrane. It carries out the reaction a ubiquinone + NADH + 5 H(+)(in) = a ubiquinol + NAD(+) + 4 H(+)(out). Functionally, core subunit of the mitochondrial membrane respiratory chain NADH dehydrogenase (Complex I) which catalyzes electron transfer from NADH through the respiratory chain, using ubiquinone as an electron acceptor. Essential for the catalytic activity and assembly of complex I. The protein is NADH-ubiquinone oxidoreductase chain 2 of Bos mutus grunniens (Wild yak).